The primary structure comprises 174 residues: Adenine phosphoribosyltransferase (174 aa).

This sequence belongs to the purine/pyrimidine phosphoribosyltransferase family. In terms of assembly, homodimer.

The protein localises to the cytoplasm. It catalyses the reaction AMP + diphosphate = 5-phospho-alpha-D-ribose 1-diphosphate + adenine. Its pathway is purine metabolism; AMP biosynthesis via salvage pathway; AMP from adenine: step 1/1. Functionally, catalyzes a salvage reaction resulting in the formation of AMP, that is energically less costly than de novo synthesis. This Lachnoclostridium phytofermentans (strain ATCC 700394 / DSM 18823 / ISDg) (Clostridium phytofermentans) protein is Adenine phosphoribosyltransferase.